We begin with the raw amino-acid sequence, 496 residues long: Probable zinc metalloprotease SNOG_06590 (496 aa).

The signal sequence occupies residues 1 to 20 (MRSSMFFAVCAAAALQTALS). The N-linked (GlcNAc...) asparagine glycan is linked to Asn-138. Zn(2+) is bound by residues His-161, Asp-181, and Glu-226. N-linked (GlcNAc...) asparagine glycosylation is present at Asn-241. Position 253 (Asp-253) interacts with Zn(2+). Asn-282, Asn-361, Asn-409, Asn-415, and Asn-457 each carry an N-linked (GlcNAc...) asparagine glycan. A Fibronectin type-III domain is found at 402 to 496 (EPMNVGINTT…PFPFGCTRNC (95 aa)).

Belongs to the peptidase M28 family. M28B subfamily. The cofactor is Zn(2+).

The protein localises to the secreted. This chain is Probable zinc metalloprotease SNOG_06590, found in Phaeosphaeria nodorum (strain SN15 / ATCC MYA-4574 / FGSC 10173) (Glume blotch fungus).